The sequence spans 340 residues: Glycerol-3-phosphate dehydrogenase [NAD(P)+] (340 aa).

Residues Ser-11, Trp-12, Arg-33, and Lys-106 each coordinate NADPH. Sn-glycerol 3-phosphate is bound by residues Lys-106, Gly-137, and Ser-139. Ala-141 provides a ligand contact to NADPH. Sn-glycerol 3-phosphate contacts are provided by Lys-192, Asp-245, Ser-255, Arg-256, and Asn-257. Residue Lys-192 is the Proton acceptor of the active site. Arg-256 is an NADPH binding site. 2 residues coordinate NADPH: Val-280 and Glu-282.

The protein belongs to the NAD-dependent glycerol-3-phosphate dehydrogenase family.

It is found in the cytoplasm. The enzyme catalyses sn-glycerol 3-phosphate + NAD(+) = dihydroxyacetone phosphate + NADH + H(+). The catalysed reaction is sn-glycerol 3-phosphate + NADP(+) = dihydroxyacetone phosphate + NADPH + H(+). It functions in the pathway membrane lipid metabolism; glycerophospholipid metabolism. Catalyzes the reduction of the glycolytic intermediate dihydroxyacetone phosphate (DHAP) to sn-glycerol 3-phosphate (G3P), the key precursor for phospholipid synthesis. This is Glycerol-3-phosphate dehydrogenase [NAD(P)+] from Bacillus cereus (strain G9842).